A 156-amino-acid chain; its full sequence is Cyanate hydratase (156 aa).

Residues Arg-96, Glu-99, and Ser-122 contribute to the active site.

The protein belongs to the cyanase family.

It catalyses the reaction cyanate + hydrogencarbonate + 3 H(+) = NH4(+) + 2 CO2. In terms of biological role, catalyzes the reaction of cyanate with bicarbonate to produce ammonia and carbon dioxide. The protein is Cyanate hydratase of Mycobacteroides abscessus (strain ATCC 19977 / DSM 44196 / CCUG 20993 / CIP 104536 / JCM 13569 / NCTC 13031 / TMC 1543 / L948) (Mycobacterium abscessus).